The chain runs to 98 residues: Ferredoxin-like protein (98 aa).

It to ferredoxins from P.putida and C.tartarivorum, ferredoxin I from A.vinelandii, ferredoxin II from D.desulfuricans.

Its function is as follows. Could be a 3Fe-4S cluster-containing protein. This chain is Ferredoxin-like protein (fixX), found in Rhizobium leguminosarum.